A 1400-amino-acid chain; its full sequence is DNA-directed RNA polymerase subunit beta' (1400 aa).

Cysteine 71, cysteine 73, cysteine 86, and cysteine 89 together coordinate Zn(2+). Mg(2+)-binding residues include aspartate 462, aspartate 464, and aspartate 466. Positions 811, 885, 892, and 895 each coordinate Zn(2+).

Belongs to the RNA polymerase beta' chain family. In terms of assembly, the RNAP catalytic core consists of 2 alpha, 1 beta, 1 beta' and 1 omega subunit. When a sigma factor is associated with the core the holoenzyme is formed, which can initiate transcription. Requires Mg(2+) as cofactor. Zn(2+) serves as cofactor.

It carries out the reaction RNA(n) + a ribonucleoside 5'-triphosphate = RNA(n+1) + diphosphate. DNA-dependent RNA polymerase catalyzes the transcription of DNA into RNA using the four ribonucleoside triphosphates as substrates. This chain is DNA-directed RNA polymerase subunit beta', found in Brucella anthropi (strain ATCC 49188 / DSM 6882 / CCUG 24695 / JCM 21032 / LMG 3331 / NBRC 15819 / NCTC 12168 / Alc 37) (Ochrobactrum anthropi).